A 137-amino-acid chain; its full sequence is Large ribosomal subunit protein uL16 (137 aa).

This sequence belongs to the universal ribosomal protein uL16 family. Part of the 50S ribosomal subunit.

In terms of biological role, binds 23S rRNA and is also seen to make contacts with the A and possibly P site tRNAs. The polypeptide is Large ribosomal subunit protein uL16 (Baumannia cicadellinicola subsp. Homalodisca coagulata).